Reading from the N-terminus, the 412-residue chain is Mast cell carboxypeptidase A (412 aa).

The signal sequence occupies residues 1–10; it reads LMGVIYSTLA. A propeptide spans 11 to 104 (activation peptide); sequence IAPVQFDREK…IDKQFDVKEE (94 aa). In terms of domain architecture, Peptidase M14 spans 113–407; that stretch reads KYNDWNKIVS…LSVKFIAKYI (295 aa). 2 cysteine pairs are disulfide-bonded: cysteine 168–cysteine 181 and cysteine 240–cysteine 263. Residues histidine 171 and glutamate 174 each coordinate Zn(2+). Histidine 299 is a Zn(2+) binding site. Glutamate 373 acts as the Proton donor/acceptor in catalysis.

This sequence belongs to the peptidase M14 family. Requires Zn(2+) as cofactor.

The protein resides in the cytoplasmic vesicle. It is found in the secretory vesicle. The enzyme catalyses Release of a C-terminal amino acid, but little or no action with -Asp, -Glu, -Arg, -Lys or -Pro.. The sequence is that of Mast cell carboxypeptidase A (Cpa3) from Rattus norvegicus (Rat).